The primary structure comprises 223 residues: Thylakoid lumenal 15.0 kDa protein 2, chloroplastic (223 aa).

Its subcellular location is the plastid. It localises to the chloroplast thylakoid lumen. The sequence is that of Thylakoid lumenal 15.0 kDa protein 2, chloroplastic from Arabidopsis thaliana (Mouse-ear cress).